A 720-amino-acid chain; its full sequence is TAL effector protein Rip19 (720 aa).

Disordered stretches follow at residues 13 to 85 (SVSL…PSLV) and 175 to 205 (QAFA…PTFL). Positions 67-85 (PRRPLPVAPASAPPAPSLV) are enriched in pro residues. A Nuclear localization signal 1 motif is present at residues 185 to 191 (RSARARR). The Cryptic repeat -1 repeat unit spans residues 286-320 (LTRAHIVDIARQRSGDLALQALLPVATALTAAPLR). One copy of the Cryptic repeat 0 repeat lies at 321–354 (LSASQIATVAQYGERPAIQALYRLRRKLTRAPLH). The Core repeat 1 repeat unit spans residues 355–389 (LTPQQVVAIASHDGGKPALEAVWAKLPVLRGVPYA). One copy of the Cryptic repeat +1 repeat lies at 390 to 423 (LSTAQVVAIACISGQQALEAIEAHMPTLRQAPHS). One copy of the Cryptic repeat +2 repeat lies at 424 to 457 (LSPERVAAIACIGGRSAVEAVRQGLPVKAIRRIR). 3 short sequence motifs (nuclear localization signal) span residues 455–458 (RIRR), 583–586 (HRKR), and 620–623 (RRKR). The interval 571-611 (SPGMAGQSACSPHRKRPAETAIAPRSIRRRPNNAGQPSEPW) is disordered.

The protein belongs to the transcription activator-like effector (TALE) family. RipTAL/RTL subfamily.

It is found in the secreted. It localises to the host nucleus. Functionally, does not activate plant gene transcription, because it has too few core repeats. The polypeptide is TAL effector protein Rip19 (Ralstonia solanacearum (Pseudomonas solanacearum)).